The sequence spans 93 residues: Large ribosomal subunit protein uL23 (93 aa).

Belongs to the universal ribosomal protein uL23 family. As to quaternary structure, part of the 50S ribosomal subunit. Contacts protein L29, and trigger factor when it is bound to the ribosome.

One of the early assembly proteins it binds 23S rRNA. One of the proteins that surrounds the polypeptide exit tunnel on the outside of the ribosome. Forms the main docking site for trigger factor binding to the ribosome. This Nitratiruptor sp. (strain SB155-2) protein is Large ribosomal subunit protein uL23.